The following is a 219-amino-acid chain: Aspartic protease inhibitor 10 (219 aa).

The signal sequence occupies residues 1–23; it reads MMKCLFLLCLCLVPIVVFSSTFT. The propeptide occupies 24-32; that stretch reads SQNLIDLPS. Positions 26 to 31 match the Vacuolar targeting signal motif; the sequence is NLIDLP. Asparagine 51 is a glycosylation site (N-linked (GlcNAc...) asparagine). 2 cysteine pairs are disulfide-bonded: cysteine 80–cysteine 125 and cysteine 173–cysteine 184.

The protein belongs to the protease inhibitor I3 (leguminous Kunitz-type inhibitor) family. In terms of tissue distribution, in tubers and green buds of untreated plants. After abscisic acid treatment or mechanical wounding is mostly accumulated in leaves, to a lesser extent in stems, but not in roots.

Its function is as follows. Inhibitor of cathepsin D (aspartic protease) and trypsin (serine protease). Protects the plant by inhibiting proteases of invading organisms. This is Aspartic protease inhibitor 10 (CDI) from Solanum tuberosum (Potato).